The following is a 315-amino-acid chain: Olfactory receptor 3A2 (315 aa).

Residues 1–29 are Extracellular-facing; it reads MEPEAGTNRTAVAEFILLGLVQTEEMQPV. N8 carries an N-linked (GlcNAc...) asparagine glycan. Residues 30-52 form a helical membrane-spanning segment; it reads VFVLFLFAYLVTIGGNLSILAAI. Residues 53-60 lie on the Cytoplasmic side of the membrane; that stretch reads LVEPKLHA. The chain crosses the membrane as a helical span at residues 61–82; that stretch reads PMYFFLGNLSVLDVGCITVTVP. At 83-103 the chain is on the extracellular side; it reads AMLGRLLSHKSTISYDACLSQ. A disulfide bridge links C100 with C192. A helical transmembrane segment spans residues 104-123; it reads LFFFHLLAGMDCFLLTAMAY. The Cytoplasmic segment spans residues 124-143; the sequence is DRFLAICWPLTYSTRMSQTV. Residues 144-161 form a helical membrane-spanning segment; it reads QRMLVAASWACAFTNALT. Residues 162–199 lie on the Extracellular side of the membrane; that stretch reads HTVAMSTLNFCGPNEVNHFYCDLPQLFQLSCSSTQLNE. Residues 200 to 223 traverse the membrane as a helical segment; it reads LLLFAVGFIMAGTPLVLIITSYSH. Residues 224 to 240 lie on the Cytoplasmic side of the membrane; it reads VAAAVLRIRSVEGWKKA. The chain crosses the membrane as a helical span at residues 241-264; the sequence is FSTCGSHLTVVCLFFGTGIFNYMR. The Extracellular portion of the chain corresponds to 265-275; the sequence is LGSEEASDKDK. Residues 276-295 form a helical membrane-spanning segment; it reads GVGVFNTVINPMLNPLIYSL. Residues 296-315 are Cytoplasmic-facing; sequence RNPDVQGALWRIFLGRRSLT.

The protein belongs to the G-protein coupled receptor 1 family.

The protein localises to the cell membrane. In terms of biological role, odorant receptor. The polypeptide is Olfactory receptor 3A2 (OR3A2) (Pan troglodytes (Chimpanzee)).